A 196-amino-acid chain; its full sequence is Putative manganese efflux pump MntP (196 aa).

6 helical membrane passes run 3-23 (PASLILLAFAMSTDAFAASIG), 39-59 (IGAVFGVVEAIMPLLGWALGH), 67-87 (GVDHWIAFVMLALLGGHMIWA), 109-129 (IWLIAFTALATSIDAMAVGIT), 137-157 (IIAASVAIGLATALMVTLGTL), and 172-192 (ILGGLILIGIGIAVLYEHLAG).

The protein belongs to the MntP (TC 9.B.29) family.

The protein localises to the cell inner membrane. Functionally, probably functions as a manganese efflux pump. The sequence is that of Putative manganese efflux pump MntP from Chromohalobacter salexigens (strain ATCC BAA-138 / DSM 3043 / CIP 106854 / NCIMB 13768 / 1H11).